Reading from the N-terminus, the 120-residue chain is Transcription elongation factor SPT4 (120 aa).

Residues 1–39 (MSASVPADLRNLRACLLCSLVKSVESFQKEGCENCEDVL) form an interaction with spt-5 region. The segment at 15–35 (CLLCSLVKSVESFQKEGCENC) adopts a C4-type zinc-finger fold.

It belongs to the SPT4 family. As to quaternary structure, interacts with spt-5 to form DSIF. DSIF interacts with RNA polymerase II and with the positive transcription elongation factor b complex (P-TEFb complex), which is composed of cdk-9 and cyclin-T (cit-1.1 or cit-1.2).

The protein resides in the nucleus. May function as a component of the DRB sensitivity-inducing factor complex (DSIF complex), which regulates transcription elongation by RNA polymerase II. DSIF may enhance transcriptional pausing at sites proximal to the promoter, which may in turn facilitate the assembly of an elongation competent RNA polymerase II complex. This is Transcription elongation factor SPT4 (spt-4) from Caenorhabditis elegans.